The sequence spans 289 residues: MRHIICHGGVITEEMAASLLDQLIEEVLADNLPPPSHFEPPTLHELYDLDVTAPEDPNEEAVSQIFPDSVMLAVQEGIDLLTFPPAPGSPEPPHLSRQPEQPEQRALGPVSMPNLVPEVIDLTCHEAGFPPSDDEDEEGEEFVLDYVEHPGHGCRSCHYHRRNTGDPDIMCSLCYMRTCGMFVYSPVSEPEPEPEPEPEPARPTRRPKLVPAILRRPTSPVSRECNSSTDSCDSGPSNTPPEIHPVVPLCPIKPVAVRVGGRRQAVECIEDLLNESGQPLDLSCKRPRP.

The segment at 41 to 49 (PTLHELYDL) is interaction with RB1 in competition with E2F1. The interaction with UBE2I stretch occupies residues 76–140 (EGIDLLTFPP…PSDDEDEEGE (65 aa)). A disordered region spans residues 82–107 (TFPPAPGSPEPPHLSRQPEQPEQRAL). Over residues 84–93 (PPAPGSPEPP) the composition is skewed to pro residues. Serine 89 bears the Phosphoserine; by host mark. Residues 113–117 (PNLVP) carry the PXLXP motif, interaction with host ZMYND11 motif. The LXCXE motif, interaction with host RB1 and TMEM173/STING signature appears at 122–126 (LTCHE). The segment at 154 to 174 (CRSCHYHRRNTGDPDIMCSLC) is a zinc-finger region. Residues 187 to 245 (VSEPEPEPEPEPEPARPTRRPKLVPAILRRPTSPVSRECNSSTDSCDSGPSNTPPEIHP) form a disordered region. A phosphoserine; by host mark is found at serine 219 and serine 231. Over residues 219-237 (SPVSRECNSSTDSCDSGPS) the composition is skewed to polar residues. Residues 258-289 (RVGGRRQAVECIEDLLNESGQPLDLSCKRPRP) carry the Bipartite nuclear localization signal motif. Positions 279-283 (PLDLS) match the PXDLS motif, CTBP-binding motif.

The protein belongs to the adenoviridae E1A protein family. As to quaternary structure, interacts with host UBE2I; this interaction interferes with polySUMOylation. Interacts with host RB1; this interaction induces the aberrant dissociation of RB1-E2F1 complex thereby disrupting the activity of RB1 and activating E2F1-regulated genes. Interacts with host ATF7; the interaction enhances ATF7-mediated viral transactivation activity which requires the zinc binding domains of both proteins. Isoform early E1A 32 kDa protein and isoform early E1A 26 kDa protein interact (via N-terminus) with CUL1 and E3 ubiquitin ligase RBX1; these interactions inhibit RBX1-CUL1-dependent elongation reaction of ubiquitin chains and attenuate ubiquitination of SCF(FBXW7) target proteins. Interacts (via PXLXP motif) with host ZMYND11/BS69 (via MYND-type zinc finger); this interaction inhibits E1A mediated transactivation. Interacts with host EP300; this interaction stimulates the acetylation of RB1 by recruiting EP300 and RB1 into a multimeric-protein complex. Interacts with host CTBP1 and CTBP2; this interaction seems to potentiate viral replication. Interacts with host DCAF7. Interacts with host DYRK1A. Interacts with host KPNA4; this interaction allows E1A import into the host nucleus. Interacts with host EP400; this interaction stabilizes MYC. Interacts (via LXCXE motif) with host TMEM173/STING; this interaction impairs the ability of TMEM173/STING to sense cytosolic DNA and promote the production of type I interferon (IFN-alpha and IFN-beta). Interacts (via C-terminus) with host ZBED1/hDREF (via C-terminus); the interaction is direct.

It localises to the host nucleus. Functionally, plays a role in viral genome replication by driving entry of quiescent cells into the cell cycle. Stimulation of progression from G1 to S phase allows the virus to efficiently use the cellular DNA replicating machinery to achieve viral genome replication. E1A protein has both transforming and trans-activating activities. Induces the disassembly of the E2F1 transcription factor from RB1 by direct competition for the same binding site on RB1, with subsequent transcriptional activation of E2F1-regulated S-phase genes and of the E2 region of the adenoviral genome. Release of E2F1 leads to the ARF-mediated inhibition of MDM2 and causes TP53/p53 to accumulate because it is not targeted for degradation by MDM2-mediated ubiquitination anymore. This increase in TP53, in turn, would arrest the cell proliferation and direct its death but this effect is counteracted by the viral protein E1B-55K. Inactivation of the ability of RB1 to arrest the cell cycle is critical for cellular transformation, uncontrolled cellular growth and proliferation induced by viral infection. Interaction with RBX1 and CUL1 inhibits ubiquitination of the proteins targeted by SCF(FBXW7) ubiquitin ligase complex, and may be linked to unregulated host cell proliferation. The tumorigenesis-restraining activity of E1A may be related to the disruption of the host CtBP-CtIP complex through the CtBP binding motif. Interacts with host TBP protein; this interaction probably disrupts the TBP-TATA complex. Interaction with host TMEM173/STING impairs the ability of TMEM173/STING to sense cytosolic DNA and promote the production of type I interferon (IFN-alpha and IFN-beta). Promotes the sumoylation of host ZBED1/hDREF with SUMO1. The sequence is that of Early E1A protein from Homo sapiens (Human).